The chain runs to 411 residues: Tyrosine--tRNA ligase (411 aa).

Residue Tyr34 coordinates L-tyrosine. Residues 39–48 carry the 'HIGH' region motif; that stretch reads CTATSLHIGS. L-tyrosine-binding residues include Tyr171 and Gln175. The short motif at 231 to 235 is the 'KMSKS' region element; the sequence is KMGKT. Lys234 serves as a coordination point for ATP. An S4 RNA-binding domain is found at 345–411; the sequence is ISAYELFYEA…GKKRHILVRV (67 aa).

This sequence belongs to the class-I aminoacyl-tRNA synthetase family. TyrS type 1 subfamily. Homodimer.

It is found in the cytoplasm. It catalyses the reaction tRNA(Tyr) + L-tyrosine + ATP = L-tyrosyl-tRNA(Tyr) + AMP + diphosphate + H(+). Its function is as follows. Catalyzes the attachment of tyrosine to tRNA(Tyr) in a two-step reaction: tyrosine is first activated by ATP to form Tyr-AMP and then transferred to the acceptor end of tRNA(Tyr). This is Tyrosine--tRNA ligase from Rickettsia rickettsii (strain Sheila Smith).